The primary structure comprises 162 residues: Cyanate hydratase (162 aa).

Catalysis depends on residues R102, E105, and S128.

Belongs to the cyanase family.

It catalyses the reaction cyanate + hydrogencarbonate + 3 H(+) = NH4(+) + 2 CO2. Its function is as follows. Catalyzes the reaction of cyanate with bicarbonate to produce ammonia and carbon dioxide. The sequence is that of Cyanate hydratase from Mycosarcoma maydis (Corn smut fungus).